A 1169-amino-acid chain; its full sequence is Transcription-repair-coupling factor (1169 aa).

A Helicase ATP-binding domain is found at Asp634–Ile795. Gly647 to Thr654 contacts ATP. The short motif at Asp748–Gln751 is the DEEQ box element. Residues Val809–Asn970 form the Helicase C-terminal domain.

It in the N-terminal section; belongs to the UvrB family. In the C-terminal section; belongs to the helicase family. RecG subfamily.

It localises to the cytoplasm. Couples transcription and DNA repair by recognizing RNA polymerase (RNAP) stalled at DNA lesions. Mediates ATP-dependent release of RNAP and its truncated transcript from the DNA, and recruitment of nucleotide excision repair machinery to the damaged site. This is Transcription-repair-coupling factor from Staphylococcus epidermidis (strain ATCC 12228 / FDA PCI 1200).